Here is a 371-residue protein sequence, read N- to C-terminus: tRNA-specific 2-thiouridylase MnmA (371 aa).

ATP is bound by residues 16-23 (GMSGGVDS) and Met-42. Positions 102–104 (NPD) are interaction with target base in tRNA. Cys-107 functions as the Nucleophile in the catalytic mechanism. Cys-107 and Cys-204 form a disulfide bridge. Gly-132 is an ATP binding site. The segment at 154–156 (KDQ) is interaction with tRNA. The Cysteine persulfide intermediate role is filled by Cys-204. The segment at 316–317 (RY) is interaction with tRNA.

The protein belongs to the MnmA/TRMU family.

It localises to the cytoplasm. The enzyme catalyses S-sulfanyl-L-cysteinyl-[protein] + uridine(34) in tRNA + AH2 + ATP = 2-thiouridine(34) in tRNA + L-cysteinyl-[protein] + A + AMP + diphosphate + H(+). Its function is as follows. Catalyzes the 2-thiolation of uridine at the wobble position (U34) of tRNA, leading to the formation of s(2)U34. The chain is tRNA-specific 2-thiouridylase MnmA from Shewanella piezotolerans (strain WP3 / JCM 13877).